We begin with the raw amino-acid sequence, 80 residues long: uncharacterized protein (80 aa).

Helical transmembrane passes span Ala-15–Val-35 and Trp-45–Val-65.

This sequence to H.influenzae HI_0974B.

It is found in the cell membrane. This is an uncharacterized protein from Escherichia coli (strain K12).